Consider the following 334-residue polypeptide: DNA-directed RNA polymerase subunit alpha (334 aa).

The alpha N-terminal domain (alpha-NTD) stretch occupies residues 1–233 (MADQTISNVL…NLFTPLVSQE (233 aa)). Positions 263-334 (DNENSYNLYN…QLKKRFKIQL (72 aa)) are alpha C-terminal domain (alpha-CTD).

The protein belongs to the RNA polymerase alpha chain family. As to quaternary structure, in plastids the minimal PEP RNA polymerase catalytic core is composed of four subunits: alpha, beta, beta', and beta''. When a (nuclear-encoded) sigma factor is associated with the core the holoenzyme is formed, which can initiate transcription.

Its subcellular location is the plastid. It is found in the chloroplast. It catalyses the reaction RNA(n) + a ribonucleoside 5'-triphosphate = RNA(n+1) + diphosphate. In terms of biological role, DNA-dependent RNA polymerase catalyzes the transcription of DNA into RNA using the four ribonucleoside triphosphates as substrates. This chain is DNA-directed RNA polymerase subunit alpha, found in Chaetosphaeridium globosum (Charophycean green alga).